The chain runs to 173 residues: NADH-ubiquinone oxidoreductase chain 6 (173 aa).

5 consecutive transmembrane segments (helical) span residues 1 to 21 (MAYI…SVAS), 25 to 45 (PYFA…VLMG), 53 to 73 (LVLF…CAAL), 87 to 107 (VLGS…WFWG), and 139 to 159 (LGGG…LVVL).

This sequence belongs to the complex I subunit 6 family.

The protein resides in the mitochondrion membrane. It carries out the reaction a ubiquinone + NADH + 5 H(+)(in) = a ubiquinol + NAD(+) + 4 H(+)(out). In terms of biological role, core subunit of the mitochondrial membrane respiratory chain NADH dehydrogenase (Complex I) that is believed to belong to the minimal assembly required for catalysis. Complex I functions in the transfer of electrons from NADH to the respiratory chain. The immediate electron acceptor for the enzyme is believed to be ubiquinone. This is NADH-ubiquinone oxidoreductase chain 6 (MT-ND6) from Gadus morhua (Atlantic cod).